The sequence spans 397 residues: Carbamoyl phosphate synthase small chain (397 aa).

The CPSase stretch occupies residues 1–204; the sequence is MSPLLPSFPF…PAYRTLDTSK (204 aa). L-glutamine is bound by residues S53, G256, and G258. The 188-residue stretch at 208–395 folds into the Glutamine amidotransferase type-1 domain; it reads KVVAYDFGVK…MELMNAAKKE (188 aa). The active-site Nucleophile is C284. 5 residues coordinate L-glutamine: L285, Q288, N326, G328, and F329. Residues H368 and E370 contribute to the active site.

Belongs to the CarA family. In terms of assembly, composed of two chains; the small (or glutamine) chain promotes the hydrolysis of glutamine to ammonia, which is used by the large (or ammonia) chain to synthesize carbamoyl phosphate. Tetramer of heterodimers (alpha,beta)4.

It catalyses the reaction hydrogencarbonate + L-glutamine + 2 ATP + H2O = carbamoyl phosphate + L-glutamate + 2 ADP + phosphate + 2 H(+). The catalysed reaction is L-glutamine + H2O = L-glutamate + NH4(+). It participates in amino-acid biosynthesis; L-arginine biosynthesis; carbamoyl phosphate from bicarbonate: step 1/1. It functions in the pathway pyrimidine metabolism; UMP biosynthesis via de novo pathway; (S)-dihydroorotate from bicarbonate: step 1/3. Small subunit of the glutamine-dependent carbamoyl phosphate synthetase (CPSase). CPSase catalyzes the formation of carbamoyl phosphate from the ammonia moiety of glutamine, carbonate, and phosphate donated by ATP, constituting the first step of 2 biosynthetic pathways, one leading to arginine and/or urea and the other to pyrimidine nucleotides. The small subunit (glutamine amidotransferase) binds and cleaves glutamine to supply the large subunit with the substrate ammonia. The polypeptide is Carbamoyl phosphate synthase small chain (Polynucleobacter asymbioticus (strain DSM 18221 / CIP 109841 / QLW-P1DMWA-1) (Polynucleobacter necessarius subsp. asymbioticus)).